Consider the following 410-residue polypeptide: Serine hydroxymethyltransferase (410 aa).

(6S)-5,6,7,8-tetrahydrofolate is bound by residues leucine 116 and 120–122; that span reads GHL. Lysine 225 is modified (N6-(pyridoxal phosphate)lysine). Position 349 to 351 (349 to 351) interacts with (6S)-5,6,7,8-tetrahydrofolate; sequence SPF.

It belongs to the SHMT family. In terms of assembly, homodimer. Requires pyridoxal 5'-phosphate as cofactor.

The protein localises to the cytoplasm. The enzyme catalyses (6R)-5,10-methylene-5,6,7,8-tetrahydrofolate + glycine + H2O = (6S)-5,6,7,8-tetrahydrofolate + L-serine. The protein operates within one-carbon metabolism; tetrahydrofolate interconversion. It functions in the pathway amino-acid biosynthesis; glycine biosynthesis; glycine from L-serine: step 1/1. Its function is as follows. Catalyzes the reversible interconversion of serine and glycine with tetrahydrofolate (THF) serving as the one-carbon carrier. This reaction serves as the major source of one-carbon groups required for the biosynthesis of purines, thymidylate, methionine, and other important biomolecules. Also exhibits THF-independent aldolase activity toward beta-hydroxyamino acids, producing glycine and aldehydes, via a retro-aldol mechanism. The protein is Serine hydroxymethyltransferase of Leuconostoc citreum (strain KM20).